A 249-amino-acid chain; its full sequence is Metal-staphylopine import system ATP-binding protein CntF (249 aa).

The region spanning 2 to 244 (IKVTDVEKSY…DNAYTRELIE (243 aa)) is the ABC transporter domain. 42–49 (GESGSGKS) provides a ligand contact to ATP.

It belongs to the ABC transporter superfamily. The complex is composed of two ATP-binding proteins (CntD and CntF), two transmembrane proteins (CntB and CntC) and a solute-binding protein (CntA).

It localises to the cell membrane. Part of the ABC transporter complex CntABCDF (Opp1) involved in the uptake of metal in complex with the metallophore staphylopine (StP). May be involved in the import of a large array of divalent metals ions such as nickel, cobalt, zinc, copper and iron. Probably responsible for energy coupling to the transport system. The polypeptide is Metal-staphylopine import system ATP-binding protein CntF (Staphylococcus aureus (strain Mu50 / ATCC 700699)).